Here is a 166-residue protein sequence, read N- to C-terminus: MQTIEQQITNVIEKSLTDMGFELVLIKFKGVNHKVVEILIDSLNGEKISVADCTKASSTISAILDVEDLIEDAYSLEVASSGLERPLVKFENYNRFLGREVKVKLKELLNGKTRYQGKIIKAENNKVYLKCEAQEVLIDYDLIKNANLVLTEEVLKKLLGSVKVSN.

This sequence belongs to the RimP family.

The protein resides in the cytoplasm. Its function is as follows. Required for maturation of 30S ribosomal subunits. In Rickettsia akari (strain Hartford), this protein is Ribosome maturation factor RimP.